The chain runs to 103 residues: Putative septation protein SpoVG (103 aa).

It belongs to the SpoVG family.

Could be involved in septation. The sequence is that of Putative septation protein SpoVG from Exiguobacterium sibiricum (strain DSM 17290 / CCUG 55495 / CIP 109462 / JCM 13490 / 255-15).